The sequence spans 105 residues: UPF0235 protein RrIowa_1526 (105 aa).

Belongs to the UPF0235 family.

The sequence is that of UPF0235 protein RrIowa_1526 from Rickettsia rickettsii (strain Iowa).